Consider the following 385-residue polypeptide: ATP phosphoribosyltransferase regulatory subunit (385 aa).

It belongs to the class-II aminoacyl-tRNA synthetase family. HisZ subfamily. As to quaternary structure, heteromultimer composed of HisG and HisZ subunits.

The protein resides in the cytoplasm. It functions in the pathway amino-acid biosynthesis; L-histidine biosynthesis; L-histidine from 5-phospho-alpha-D-ribose 1-diphosphate: step 1/9. Its function is as follows. Required for the first step of histidine biosynthesis. May allow the feedback regulation of ATP phosphoribosyltransferase activity by histidine. In Lysinibacillus sphaericus (strain C3-41), this protein is ATP phosphoribosyltransferase regulatory subunit.